Consider the following 244-residue polypeptide: 5-oxoprolinase subunit A (244 aa).

Belongs to the LamB/PxpA family. Forms a complex composed of PxpA, PxpB and PxpC.

It carries out the reaction 5-oxo-L-proline + ATP + 2 H2O = L-glutamate + ADP + phosphate + H(+). Catalyzes the cleavage of 5-oxoproline to form L-glutamate coupled to the hydrolysis of ATP to ADP and inorganic phosphate. The polypeptide is 5-oxoprolinase subunit A (Shigella dysenteriae serotype 1 (strain Sd197)).